A 161-amino-acid chain; its full sequence is 3-isopropylmalate dehydratase small subunit (161 aa).

Belongs to the LeuD family. LeuD type 2 subfamily. Heterodimer of LeuC and LeuD.

It catalyses the reaction (2R,3S)-3-isopropylmalate = (2S)-2-isopropylmalate. It participates in amino-acid biosynthesis; L-leucine biosynthesis; L-leucine from 3-methyl-2-oxobutanoate: step 2/4. Its function is as follows. Catalyzes the isomerization between 2-isopropylmalate and 3-isopropylmalate, via the formation of 2-isopropylmaleate. This Pyrobaculum calidifontis (strain DSM 21063 / JCM 11548 / VA1) protein is 3-isopropylmalate dehydratase small subunit.